We begin with the raw amino-acid sequence, 697 residues long: Tryptophan synthase (697 aa).

The tryptophan synthase alpha chain stretch occupies residues Met1–Tyr298. Residues Glu50 and Asp61 each act as proton acceptor in the active site. A tryptophan synthase beta chain region spans residues Tyr298–Phe697. The residue at position 381 (Lys381) is an N6-(pyridoxal phosphate)lysine.

The protein in the N-terminal section; belongs to the TrpA family. It in the C-terminal section; belongs to the TrpB family. It depends on pyridoxal 5'-phosphate as a cofactor.

The catalysed reaction is (1S,2R)-1-C-(indol-3-yl)glycerol 3-phosphate + L-serine = D-glyceraldehyde 3-phosphate + L-tryptophan + H2O. It functions in the pathway amino-acid biosynthesis; L-tryptophan biosynthesis; L-tryptophan from chorismate: step 5/5. This chain is Tryptophan synthase (trp2), found in Schizosaccharomyces pombe (strain 972 / ATCC 24843) (Fission yeast).